Reading from the N-terminus, the 288-residue chain is Putative alkaline ceramidase dcd3A (288 aa).

A glycan (N-linked (GlcNAc...) asparagine) is linked at Asn-23. The next 7 membrane-spanning stretches (helical) occupy residues 41-61, 78-98, 105-125, 146-166, 172-192, 206-226, and 240-260; these read IISL…GTGV, VILS…YHAT, LFDE…MVTV, HLLP…ILVI, ILQV…IYLI, SYLY…WVVE, and LHAF…QFLI.

This sequence belongs to the alkaline ceramidase family.

Its subcellular location is the membrane. This Dictyostelium discoideum (Social amoeba) protein is Putative alkaline ceramidase dcd3A (dcd3A).